The chain runs to 285 residues: 4-diphosphocytidyl-2-C-methyl-D-erythritol kinase (285 aa).

Residue lysine 14 is part of the active site. Residue 97–107 participates in ATP binding; the sequence is PMGGGIGGGSS. The active site involves aspartate 139.

The protein belongs to the GHMP kinase family. IspE subfamily.

The enzyme catalyses 4-CDP-2-C-methyl-D-erythritol + ATP = 4-CDP-2-C-methyl-D-erythritol 2-phosphate + ADP + H(+). Its pathway is isoprenoid biosynthesis; isopentenyl diphosphate biosynthesis via DXP pathway; isopentenyl diphosphate from 1-deoxy-D-xylulose 5-phosphate: step 3/6. Its function is as follows. Catalyzes the phosphorylation of the position 2 hydroxy group of 4-diphosphocytidyl-2C-methyl-D-erythritol. This chain is 4-diphosphocytidyl-2-C-methyl-D-erythritol kinase, found in Tolumonas auensis (strain DSM 9187 / NBRC 110442 / TA 4).